A 229-amino-acid chain; its full sequence is DNA mismatch repair protein MutH (229 aa).

Belongs to the MutH family.

It is found in the cytoplasm. Its function is as follows. Sequence-specific endonuclease that cleaves unmethylated GATC sequences. It is involved in DNA mismatch repair. This Escherichia coli O6:K15:H31 (strain 536 / UPEC) protein is DNA mismatch repair protein MutH.